The sequence spans 679 residues: MHLFACLCIVLSFLEGVGCLCPSQCTCDYHGRNDGSGSRLVLCNDMDMNELPTNLPVDTVKLRIEKTVIRRISAEAFYYLVELQYLWVTYNSVASIDPSSFYNLKQLHELRLDGNSLAAFPWASLLDMPLLRTLDLHNNKITSVPNEALRYLKNLAYLDLSSNRLTTLPPDFLESWTHLVSTPSGVLDLSPSRIILGLQDNPWFCDCHISKMIELSKVVDPAIVLLDPLMTCSEPERLTGILFQRAELEHCLKPSVMTSATKIMSALGSNVLLRCDATGFPTPQITWTRSDSSPVNYTVIQESPEEGVRWSIMSLTGISSKDAGDYKCKAKNLAGMSEAVVTVTVLGITTTPIPPDTSERTGDHPEWDVQPGSGRSTSVSSASSYLWSSSFSPTSSFSASTLSPPSTASFSLSPFSSSTVSSTTTLSTSISASTTMANKRSFQLHQGGKRNLKVAKNGSKLPPASTSKKEELALLDQTMLTETNAAIENLRVVSETKESVTLTWNMINTTHNSAVTVLYSKYGGKDLLLLNADSSKNQVTIDGLEPGGQYMACVCPKGVPPQKDQCITFSTERVEGDDSQWSLLLVVTSTACVVILPLICFLLYKVCKLQCKSEPFWEDDLAKETYIQFETLFPRSQSVGELWTRSHRDDSEKLLLCSRSSVESQVTFKSEGSRPEYYC.

Positions 1-19 (MHLFACLCIVLSFLEGVGC) are cleaved as a signal peptide. Residues 20–582 (LCPSQCTCDY…RVEGDDSQWS (563 aa)) lie on the Lumenal side of the membrane. 5 LRR repeats span residues 56 to 79 (PVDTVKLRIEKTVIRRISAEAFYY), 80 to 103 (LVELQYLWVTYNSVASIDPSSFYN), 104 to 128 (LKQLHELRLDGNSLAAFPWASLLDM), 129 to 151 (PLLRTLDLHNNKITSVPNEALRY), and 152 to 175 (LKNLAYLDLSSNRLTTLPPDFLES). In terms of domain architecture, LRRCT spans 201–253 (NPWFCDCHISKMIELSKVVDPAIVLLDPLMTCSEPERLTGILFQRAELEHCLK). An Ig-like domain is found at 254–344 (PSVMTSATKI…GMSEAVVTVT (91 aa)). C275 and C328 are oxidised to a cystine. An N-linked (GlcNAc...) asparagine glycan is attached at N296. Residues 351–375 (TPIPPDTSERTGDHPEWDVQPGSGR) form a disordered region. Residues 357-367 (TSERTGDHPEW) are compositionally biased toward basic and acidic residues. The Fibronectin type-III domain occupies 486–574 (AIENLRVVSE…QCITFSTERV (89 aa)). A helical transmembrane segment spans residues 583 to 603 (LLLVVTSTACVVILPLICFLL). Topologically, residues 604 to 679 (YKVCKLQCKS…SEGSRPEYYC (76 aa)) are cytoplasmic.

Glycosylated. As to expression, detected in the outer plexiform layer (OPL) of the retina where it localizes to ON-bipolar cells (at protein level).

It is found in the cell projection. The protein localises to the dendrite. Its subcellular location is the perikaryon. The protein resides in the endoplasmic reticulum membrane. Functionally, plays a role in the synapse formation and synaptic transmission between cone photoreceptor cells and retinal bipolar cells. Required for normal transmission of a light-evoked stimulus from the cone photoreceptor cells to the ON-bipolar cells and ON-ganglion cells in the inner retina. Required in retinal ON-bipolar cells for normal localization of the cation channel TRPM1 at dendrite tips. Seems to play a specific role in synaptic contacts made by ON-bipolar cells with cone photoreceptor pedicles. May also have a role in cone synapse formation. Might facilitate FGFR1 exit from the endoplasmic reticulum to the Golgi. Could be a regulator of the FGFRs. The polypeptide is Leucine-rich repeat, immunoglobulin-like domain and transmembrane domain-containing protein 3 (LRIT3) (Homo sapiens (Human)).